The following is a 304-amino-acid chain: Chromo domain-containing protein cec-1 (304 aa).

The region spanning tyrosine 8–lysine 66 is the Chromo domain. Basic and acidic residues predominate over residues alanine 63 to alanine 73. Disordered regions lie at residues alanine 63–leucine 235 and valine 248–glutamate 304. Over residues glycine 75 to alanine 102 the composition is skewed to low complexity. Residues proline 106–arginine 116 show a composition bias toward basic residues. Basic and acidic residues predominate over residues isoleucine 122–alanine 141. Composition is skewed to acidic residues over residues glutamate 142–glutamate 152, glutamate 163–leucine 204, and glutamate 212–isoleucine 233. The span at valine 248–valine 292 shows a compositional bias: low complexity. The segment covering threonine 293 to glutamate 304 has biased composition (acidic residues).

The protein localises to the nucleus. It is found in the chromosome. This is Chromo domain-containing protein cec-1 (cec-1) from Caenorhabditis elegans.